A 282-amino-acid chain; its full sequence is Mitochondrial outer membrane protein porin (282 aa).

Belongs to the eukaryotic mitochondrial porin family.

It is found in the mitochondrion outer membrane. Forms a channel through the cell membrane that allows diffusion of small hydrophilic molecules. The channel adopts an open conformation at low or zero membrane potential and a closed conformation at potentials above 30-40 mV. The open state has a weak anion selectivity whereas the closed state is cation-selective. The protein is Mitochondrial outer membrane protein porin (POR1) of Candida albicans (strain SC5314 / ATCC MYA-2876) (Yeast).